Reading from the N-terminus, the 223-residue chain is Urease accessory protein UreF (223 aa).

It belongs to the UreF family. As to quaternary structure, ureD, UreF and UreG form a complex that acts as a GTP-hydrolysis-dependent molecular chaperone, activating the urease apoprotein by helping to assemble the nickel containing metallocenter of UreC. The UreE protein probably delivers the nickel.

The protein resides in the cytoplasm. Functionally, required for maturation of urease via the functional incorporation of the urease nickel metallocenter. The sequence is that of Urease accessory protein UreF from Rhizobium leguminosarum bv. viciae.